The following is a 261-amino-acid chain: Imidazole glycerol phosphate synthase subunit HisF (261 aa).

Residues aspartate 16 and aspartate 135 contribute to the active site.

The protein belongs to the HisA/HisF family. As to quaternary structure, heterodimer of HisH and HisF.

Its subcellular location is the cytoplasm. The enzyme catalyses 5-[(5-phospho-1-deoxy-D-ribulos-1-ylimino)methylamino]-1-(5-phospho-beta-D-ribosyl)imidazole-4-carboxamide + L-glutamine = D-erythro-1-(imidazol-4-yl)glycerol 3-phosphate + 5-amino-1-(5-phospho-beta-D-ribosyl)imidazole-4-carboxamide + L-glutamate + H(+). It functions in the pathway amino-acid biosynthesis; L-histidine biosynthesis; L-histidine from 5-phospho-alpha-D-ribose 1-diphosphate: step 5/9. In terms of biological role, IGPS catalyzes the conversion of PRFAR and glutamine to IGP, AICAR and glutamate. The HisF subunit catalyzes the cyclization activity that produces IGP and AICAR from PRFAR using the ammonia provided by the HisH subunit. This Mycobacterium sp. (strain JLS) protein is Imidazole glycerol phosphate synthase subunit HisF.